Reading from the N-terminus, the 780-residue chain is Phosphoenolpyruvate synthase (780 aa).

Catalysis depends on His-409, which acts as the Tele-phosphohistidine intermediate. Substrate is bound by residues Arg-499, Arg-566, Glu-668, Gly-689, Ser-690, Asn-691, and Asp-692. Glu-668 is a binding site for Mg(2+). A Mg(2+)-binding site is contributed by Asp-692.

Belongs to the PEP-utilizing enzyme family. The cofactor is Mg(2+).

It carries out the reaction pyruvate + ATP + H2O = phosphoenolpyruvate + AMP + phosphate + 2 H(+). It functions in the pathway carbohydrate biosynthesis; gluconeogenesis. Functionally, catalyzes the phosphorylation of pyruvate to phosphoenolpyruvate. This is Phosphoenolpyruvate synthase (ppsA) from Deinococcus radiodurans (strain ATCC 13939 / DSM 20539 / JCM 16871 / CCUG 27074 / LMG 4051 / NBRC 15346 / NCIMB 9279 / VKM B-1422 / R1).